The chain runs to 491 residues: Spermatogenesis-defective protein 39 homolog (491 aa).

A Phosphothreonine modification is found at threonine 21. Over residues 72–81 (KETAGSSGST) the composition is skewed to polar residues. Positions 72 to 101 (KETAGSSGSTPEGREQLKGRNSFYTQLPKP) are disordered. Residue threonine 115 is modified to Phosphothreonine. Residues serine 119, serine 122, and serine 128 each carry the phosphoserine modification. The interval 121-141 (QSLSDALSDTPAKSYAPELGR) is disordered. A Phosphothreonine modification is found at threonine 130.

It belongs to the SPE39 family. In terms of assembly, interacts with VPS33B. Associates with the homotypic fusion and vacuole protein sorting (HOPS) complex; impaired by VPS33B. Interacts with RAB11A.

It localises to the cytoplasm. It is found in the cytoplasmic vesicle. The protein resides in the early endosome. Its subcellular location is the recycling endosome. The protein localises to the late endosome. In terms of biological role, proposed to be involved in endosomal maturation implicating in part VPS33B. In epithelial cells, the VPS33B:VIPAS39 complex may play a role in the apical RAB11A-dependent recycling pathway and in the maintenance of the apical-basolateral polarity. May play a role in lysosomal trafficking, probably via association with the core HOPS complex in a discrete population of endosomes; the functions seems to be independent of VPS33B. May play a role in vesicular trafficking during spermatogenesis. May be involved in direct or indirect transcriptional regulation of E-cadherin. This Mus musculus (Mouse) protein is Spermatogenesis-defective protein 39 homolog (Vipas39).